The sequence spans 357 residues: Putative diaminopimelate epimerase, chloroplastic (357 aa).

The transit peptide at 1 to 47 (MSSATAAATATIAAAAAAAAKLAATPAPAPSRRRLTLRGNPTARRCV) directs the protein to the chloroplast. Catalysis depends on residues C145 and C300.

It belongs to the diaminopimelate epimerase family.

The protein localises to the plastid. Its subcellular location is the chloroplast. The catalysed reaction is (2S,6S)-2,6-diaminopimelate = meso-2,6-diaminopimelate. The protein operates within amino-acid biosynthesis; L-lysine biosynthesis via DAP pathway; DL-2,6-diaminopimelate from LL-2,6-diaminopimelate: step 1/1. The polypeptide is Putative diaminopimelate epimerase, chloroplastic (DAPF) (Oryza sativa subsp. indica (Rice)).